The sequence spans 353 residues: 3-isopropylmalate dehydrogenase (353 aa).

76–89 serves as a coordination point for NAD(+); that stretch reads GPKWDDPRAKVRPE. Positions 96, 106, 134, and 223 each coordinate substrate. The Mg(2+) site is built by Asp-223, Asp-247, and Asp-251. 281-293 contacts NAD(+); sequence GSAPDIAGKGIAN.

This sequence belongs to the isocitrate and isopropylmalate dehydrogenases family. LeuB type 1 subfamily. In terms of assembly, homodimer. Mg(2+) serves as cofactor. Requires Mn(2+) as cofactor.

The protein resides in the cytoplasm. The catalysed reaction is (2R,3S)-3-isopropylmalate + NAD(+) = 4-methyl-2-oxopentanoate + CO2 + NADH. The protein operates within amino-acid biosynthesis; L-leucine biosynthesis; L-leucine from 3-methyl-2-oxobutanoate: step 3/4. Catalyzes the oxidation of 3-carboxy-2-hydroxy-4-methylpentanoate (3-isopropylmalate) to 3-carboxy-4-methyl-2-oxopentanoate. The product decarboxylates to 4-methyl-2 oxopentanoate. This chain is 3-isopropylmalate dehydrogenase, found in Anaeromyxobacter dehalogenans (strain 2CP-C).